The sequence spans 154 residues: Endoribonuclease YbeY (154 aa).

Zn(2+) is bound by residues histidine 113, histidine 117, and histidine 123.

The protein belongs to the endoribonuclease YbeY family. Requires Zn(2+) as cofactor.

The protein resides in the cytoplasm. Single strand-specific metallo-endoribonuclease involved in late-stage 70S ribosome quality control and in maturation of the 3' terminus of the 16S rRNA. The polypeptide is Endoribonuclease YbeY (Verminephrobacter eiseniae (strain EF01-2)).